The chain runs to 35 residues: uncharacterized protein (35 aa).

Residues 14 to 34 (LAHLIGIIYLIIILGTLVMLF) form a helical membrane-spanning segment.

The protein resides in the endoplasmic reticulum membrane. This is an uncharacterized protein from Saccharomyces cerevisiae (strain ATCC 204508 / S288c) (Baker's yeast).